Reading from the N-terminus, the 975-residue chain is FHF complex subunit HOOK-interacting protein 1B (975 aa).

The segment at 465-496 (APSPPRPEHASWARGPGSPSVDSSSVVTVPRP) is disordered. Ser-467 carries the post-translational modification Phosphoserine. Over residues 482–496 (SPSVDSSSVVTVPRP) the composition is skewed to low complexity. A phosphoserine mark is found at Ser-510, Ser-523, Ser-529, and Ser-533. Disordered stretches follow at residues 511-548 (LGGS…GELE), 573-621 (SAPY…GLAV), and 690-717 (SNGG…SFTC). A compositionally biased stretch (low complexity) spans 527-538 (TASPTSSPSRRP). Over residues 597 to 608 (LLPEEDRDNVRE) the composition is skewed to basic and acidic residues. Ser-863 is subject to Phosphoserine. Phosphothreonine is present on Thr-892. A Phosphoserine modification is found at Ser-900.

This sequence belongs to the FHIP family. As to quaternary structure, component of the FTS/Hook/FHIP complex (FHF complex), composed of AKTIP/FTS, FHIP1B, and one or more members of the Hook family of proteins HOOK1, HOOK2, and HOOK3. The FHF complex associates with the homotypic vesicular sorting complex (the HOPS complex).

Component of the FTS/Hook/FHIP complex (FHF complex). The FHF complex may function to promote vesicle trafficking and/or fusion via the homotypic vesicular protein sorting complex (the HOPS complex). FHF complex promotes the distribution of AP-4 complex to the perinuclear area of the cell. The polypeptide is FHF complex subunit HOOK-interacting protein 1B (Mus musculus (Mouse)).